The primary structure comprises 1091 residues: ATP-dependent helicase/deoxyribonuclease subunit B (1091 aa).

It belongs to the helicase family. AddB/RexB type 2 subfamily. As to quaternary structure, heterodimer of AddA and RexB. The cofactor is Mg(2+).

Functionally, the heterodimer acts as both an ATP-dependent DNA helicase and an ATP-dependent, dual-direction single-stranded exonuclease. Recognizes the chi site generating a DNA molecule suitable for the initiation of homologous recombination. This subunit has 5' -&gt; 3' nuclease activity but not helicase activity. The chain is ATP-dependent helicase/deoxyribonuclease subunit B from Streptococcus pneumoniae serotype 19F (strain G54).